The chain runs to 328 residues: Protein FAM76B (328 aa).

The segment at 143-232 is disordered; the sequence is KEQRKGLGSS…ITQSMDSGGT (90 aa). Over residues 148–159 the composition is skewed to low complexity; sequence GLGSSHSNSSSL. The span at 165-183 shows a compositional bias: basic residues; the sequence is QRHHHHHQHHRHGSSHHKI. The span at 185–201 shows a compositional bias: polar residues; that stretch reads GNLSPEQDQGLWKQSIQ. Residue S188 is modified to Phosphoserine. A compositionally biased stretch (basic and acidic residues) spans 203-213; that stretch reads ETPKKKPKLET. A compositionally biased stretch (polar residues) spans 216-232; it reads SNGDSSSITQSMDSGGT. Residues 237-316 adopt a coiled-coil conformation; that stretch reads LISQLKEEVM…KQVAALSKGK (80 aa).

It belongs to the FAM76 family. As to expression, highly expressed in hematopoietic and immune systems including in the thymus, spleen, kidney, and blood vessel.

Plays a role in hematopoiesis and immune system development, and participates in the inflammatory response. The chain is Protein FAM76B (fam76b) from Danio rerio (Zebrafish).